The chain runs to 372 residues: L-selectin (372 aa).

Residues 1-28 form the signal peptide; it reads MVFPWRCQSAQRGSWSFLKLWIRTLLCC. Residues 29 to 38 constitute a propeptide that is removed on maturation; the sequence is DLLPHHGTHC. The Extracellular segment spans residues 39-332; that stretch reads WTYHYSERSM…FSKIKEGDYN (294 aa). Positions 55–155 constitute a C-type lectin domain; it reads KFCKHNYTDL…ACHKRKAALC (101 aa). Disulfide bonds link cysteine 57–cysteine 155, cysteine 128–cysteine 147, cysteine 128–cysteine 160, cysteine 160–cysteine 171, cysteine 165–cysteine 180, cysteine 182–cysteine 191, cysteine 197–cysteine 241, cysteine 227–cysteine 254, cysteine 259–cysteine 303, and cysteine 289–cysteine 316. Residues asparagine 60 and asparagine 104 are each glycosylated (N-linked (GlcNAc...) asparagine). 5 residues coordinate Ca(2+): glutamate 118, asparagine 120, glutamate 126, asparagine 143, and aspartate 144. In terms of domain architecture, EGF-like spans 156–192; it reads YTASCQPESCNRHGECVETINNNTCICDPGYYGPQCQ. The N-linked (GlcNAc...) asparagine glycan is linked to asparagine 177. 2 Sushi domains span residues 195 to 256 and 257 to 318; these read IQCE…ICQV and IQCM…ICQK. Asparagine 226, asparagine 246, and asparagine 278 each carry an N-linked (GlcNAc...) asparagine glycan. Residues 333–355 form a helical membrane-spanning segment; sequence PLFIPVAVMVTAFSGLAFIIWLA. Over 356 to 372 the chain is Cytoplasmic; sequence RRLKKGKKSQERMDDPY.

The protein belongs to the selectin/LECAM family. Interaction with SELPLG/PSGL1 and PODXL2 is required for promoting recruitment and rolling of leukocytes. This interaction is dependent on the sialyl Lewis X glycan modification of SELPLG and PODXL2, and tyrosine sulfation modifications of SELPLG. Sulfation on 'Tyr-51' of SELPLG is important for L-selectin binding. In terms of processing, N-glycosylated. In terms of tissue distribution, expressed in peripheral blood mononuclear cells (PBMC), spleen and thymus.

It localises to the cell membrane. Its function is as follows. Calcium-dependent lectin that mediates cell adhesion by binding to glycoproteins on neighboring cells. Mediates the adherence of lymphocytes to endothelial cells of high endothelial venules in peripheral lymph nodes. Promotes initial tethering and rolling of leukocytes in endothelia. In Rattus norvegicus (Rat), this protein is L-selectin (Sell).